Here is a 219-residue protein sequence, read N- to C-terminus: Leukocyte surface antigen CD53 (219 aa).

Residues 1–11 are Cytoplasmic-facing; that stretch reads MGMSSLKLLKF. A helical membrane pass occupies residues 12–32; the sequence is VLFFFNLIFWFCGCCILGLGI. The Extracellular segment spans residues 33–54; sequence YLLIHSKFGVLFHNLPSLTLGN. Residues 55-69 form a helical membrane-spanning segment; it reads VLVIVGSVIMVVAFL. Topologically, residues 70–80 are cytoplasmic; that stretch reads GCMGSIKENKC. The helical transmembrane segment at 81-106 threads the bilayer; that stretch reads LLMSFFVLLLIILLAEVTLAILLFVY. At 107–181 the chain is on the extracellular side; the sequence is EQKLKEYVAE…IQAKQWFHSN (75 aa). Residues Asn-129 and Asn-148 are each glycosylated (N-linked (GlcNAc...) asparagine). The chain crosses the membrane as a helical span at residues 182 to 206; that stretch reads FLYIGITTICVCVIQVLGMSFALTL. The Cytoplasmic segment spans residues 207 to 219; sequence NCQIDKTSQVLGL.

This sequence belongs to the tetraspanin (TM4SF) family. In terms of assembly, interacts with SCIMP. Interacts with CD45/PTPRC. Interacts with IL7R. Interacts with RBL2 and PPP2CA.

It is found in the cell membrane. Its subcellular location is the cell junction. The protein resides in the membrane. The protein localises to the synapse. Structural component of specialized membrane microdomains known as tetraspanin-enriched microdomains (TERMs), which act as platforms for receptor clustering and signaling. Participates thereby in diverse biological functions such as cell signal transduction, adhesion, migration and protein trafficking. Plays a role in the activation of monocytes and B-cells. Acts as an essential regulator of B-cell development by promoting interleukin-7 receptor/IL7R signaling. Also promotes, in B-cells, the BCR signaling by recruiting PKC to the plasma membrane in order to phosphorylate its substrates. Plays an essential role in B- and T-cells homing to lymph nodes by stabilizing L-selectin/SELL cell surface expression. Also mediates metabolic and inflammatory functions in hepatocytes and adipose tissue by promoting TNF-alpha and LPS signaling independent of the immune compartment. The sequence is that of Leukocyte surface antigen CD53 (CD53) from Bos taurus (Bovine).